Reading from the N-terminus, the 249-residue chain is Type-1Aa cytolytic delta-endotoxin (249 aa).

The protein belongs to the cyt1/cyt2 endotoxin family. Post-translationally, active after proteolytic processing.

Its function is as follows. Kills the larvae of dipteran insects by making pores in the epithelial cell membrane of the insect midgut. Acts on mosquitos and black flies. The sequence is that of Type-1Aa cytolytic delta-endotoxin (cyt1Aa) from Bacillus thuringiensis subsp. morrisoni.